A 400-amino-acid chain; its full sequence is Lipid-A-disaccharide synthase (400 aa).

Belongs to the LpxB family.

The catalysed reaction is a lipid X + a UDP-2-N,3-O-bis[(3R)-3-hydroxyacyl]-alpha-D-glucosamine = a lipid A disaccharide + UDP + H(+). It participates in bacterial outer membrane biogenesis; LPS lipid A biosynthesis. Its function is as follows. Condensation of UDP-2,3-diacylglucosamine and 2,3-diacylglucosamine-1-phosphate to form lipid A disaccharide, a precursor of lipid A, a phosphorylated glycolipid that anchors the lipopolysaccharide to the outer membrane of the cell. This Acidobacterium capsulatum (strain ATCC 51196 / DSM 11244 / BCRC 80197 / JCM 7670 / NBRC 15755 / NCIMB 13165 / 161) protein is Lipid-A-disaccharide synthase.